Here is a 242-residue protein sequence, read N- to C-terminus: Small ribosomal subunit protein uS3 (242 aa).

The KH type-2 domain occupies 39 to 110 (IRKFIHKKYG…QVRINVVEVE (72 aa)). Positions 216–242 (QTMPVGANPRRRASRRPQQFEDRSNEG) are disordered. Basic and acidic residues predominate over residues 233 to 242 (QQFEDRSNEG).

This sequence belongs to the universal ribosomal protein uS3 family. Part of the 30S ribosomal subunit. Forms a tight complex with proteins S10 and S14.

Functionally, binds the lower part of the 30S subunit head. Binds mRNA in the 70S ribosome, positioning it for translation. This chain is Small ribosomal subunit protein uS3, found in Synechococcus sp. (strain CC9902).